Here is a 237-residue protein sequence, read N- to C-terminus: ATP synthase subunit a (237 aa).

6 helical membrane passes run 18 to 38 (STLWMAIGVLMIALLMVVGTL), 77 to 97 (IFTLFLFILFSNFLGLIPMAF), 103 to 123 (IAVTGVMAMGVFIGVTALGFM), 132 to 152 (LFWVSAAPLPLRPILAVIEVI), 185 to 205 (LILFSFVGVIVTPLSVLAIVA), and 209 to 229 (LEILVAFVQAYVFTILTCVYL).

It belongs to the ATPase A chain family. F-type ATPases have 2 components, CF(1) - the catalytic core - and CF(0) - the membrane proton channel. CF(1) has five subunits: alpha(3), beta(3), gamma(1), delta(1), epsilon(1). CF(0) has three main subunits: a(1), b(2) and c(9-12). The alpha and beta chains form an alternating ring which encloses part of the gamma chain. CF(1) is attached to CF(0) by a central stalk formed by the gamma and epsilon chains, while a peripheral stalk is formed by the delta and b chains.

The protein resides in the cellular chromatophore membrane. Its function is as follows. Key component of the proton channel; it plays a direct role in the translocation of protons across the membrane. This chain is ATP synthase subunit a, found in Rhodobacter capsulatus (Rhodopseudomonas capsulata).